Reading from the N-terminus, the 391-residue chain is S-adenosylmethionine synthase (391 aa).

H19 is a binding site for ATP. Residue D21 coordinates Mg(2+). Residue E47 participates in K(+) binding. L-methionine is bound by residues E60 and Q103. A flexible loop region spans residues Q103–R113. ATP-binding positions include D168–K170, R236–F237, D245, R251–K252, A268, and K272. D245 lines the L-methionine pocket. K276 is an L-methionine binding site.

It belongs to the AdoMet synthase family. Homotetramer; dimer of dimers. Requires Mg(2+) as cofactor. It depends on K(+) as a cofactor.

It is found in the cytoplasm. It catalyses the reaction L-methionine + ATP + H2O = S-adenosyl-L-methionine + phosphate + diphosphate. The protein operates within amino-acid biosynthesis; S-adenosyl-L-methionine biosynthesis; S-adenosyl-L-methionine from L-methionine: step 1/1. Catalyzes the formation of S-adenosylmethionine (AdoMet) from methionine and ATP. The overall synthetic reaction is composed of two sequential steps, AdoMet formation and the subsequent tripolyphosphate hydrolysis which occurs prior to release of AdoMet from the enzyme. The polypeptide is S-adenosylmethionine synthase (Oleidesulfovibrio alaskensis (strain ATCC BAA-1058 / DSM 17464 / G20) (Desulfovibrio alaskensis)).